The following is a 1371-amino-acid chain: Pleckstrin homology-like domain family B member 1 (1371 aa).

A Phosphoserine modification is found at serine 51. The FHA domain maps to 64–125 (TVIGSAARDI…LTQGCMLCLG (62 aa)). Arginine 131 is modified (asymmetric dimethylarginine). Residues 153-182 (GPTYNPGSAESESLVNGNHTAQPATRAPSA) form a disordered region. Over residues 157 to 175 (NPGSAESESLVNGNHTAQP) the composition is skewed to polar residues. A phosphoserine mark is found at serine 192, serine 220, and serine 223. 2 disordered regions span residues 211–336 (AAGK…TDSP) and 368–573 (PSSG…RVPI). Composition is skewed to low complexity over residues 252–273 (SPAF…HSPS) and 296–312 (LQPP…SDSP). 2 positions are modified to phosphoserine: serine 325 and serine 335. A compositionally biased stretch (polar residues) spans 368–377 (PSSGARSQPA). Phosphoserine occurs at positions 382, 405, 431, 445, 463, 472, 491, and 503. A compositionally biased stretch (low complexity) spans 464-477 (PSLSRRALSPLPAR). The segment covering 483 to 493 (KLSREVAESPR) has biased composition (basic and acidic residues). Residue arginine 514 is modified to Omega-N-methylarginine. Phosphoserine is present on residues serine 520 and serine 522. The residue at position 524 (threonine 524) is a Phosphothreonine. Serine 535, serine 541, serine 553, serine 557, serine 565, serine 580, serine 585, and serine 683 each carry phosphoserine. Residues 547–559 (GSLTGASPRQSPR) are compositionally biased toward polar residues. 2 disordered regions span residues 672–714 (ESGG…GAKH) and 942–1020 (GLAA…QNGT). Composition is skewed to basic and acidic residues over residues 682–696 (ESME…KEEC) and 703–714 (QQEHEDAPGAKH). A coiled-coil region spans residues 688 to 798 (DEENLKEECS…ETGIQKDRDK (111 aa)). Residues serine 976 and serine 1022 each carry the phosphoserine modification. The span at 976 to 997 (SPLPRTRSGPLPSSSGSSSSSS) shows a compositional bias: low complexity. The segment at 1124 to 1143 (SMETSISTGGNSACSPDNMS) is disordered. A coiled-coil region spans residues 1150 to 1216 (MGKIEEMEKM…QQLVEKEVKL (67 aa)). In terms of domain architecture, PH spans 1261-1364 (SKVCRGYLIK…WMDVIVTGAE (104 aa)).

This chain is Pleckstrin homology-like domain family B member 1 (Phldb1), found in Mus musculus (Mouse).